A 46-amino-acid polypeptide reads, in one-letter code: Bottromycin D (46 aa).

A propeptide spanning residues 10-46 is cleaved from the precursor; the sequence is MTADFLNDDPNNAELSSLEMEELESWGAWSDDTDQSV.

In terms of processing, the precursor peptide is first ribosomally synthesized and then highly tailored by specific enzymes to yield the final natural product. These modifications include several methylations, cyclization and the formation of t-Leu and Thia-beta-Ala residues.

The protein resides in the secreted. Its function is as follows. Bottromycin D is a ribosomally synthesized and post-translationally modified peptide (RiPP) that displays antibiotic activity against methicillin-resistant S.aureus (MRSA). The polypeptide is Bottromycin D (Streptomyces sp).